Here is a 559-residue protein sequence, read N- to C-terminus: 2-succinyl-5-enolpyruvyl-6-hydroxy-3-cyclohexene-1-carboxylate synthase (559 aa).

It belongs to the TPP enzyme family. MenD subfamily. As to quaternary structure, homodimer. Mg(2+) is required as a cofactor. The cofactor is Mn(2+). It depends on thiamine diphosphate as a cofactor.

The enzyme catalyses isochorismate + 2-oxoglutarate + H(+) = 5-enolpyruvoyl-6-hydroxy-2-succinyl-cyclohex-3-ene-1-carboxylate + CO2. Its pathway is quinol/quinone metabolism; 1,4-dihydroxy-2-naphthoate biosynthesis; 1,4-dihydroxy-2-naphthoate from chorismate: step 2/7. It participates in quinol/quinone metabolism; menaquinone biosynthesis. Functionally, catalyzes the thiamine diphosphate-dependent decarboxylation of 2-oxoglutarate and the subsequent addition of the resulting succinic semialdehyde-thiamine pyrophosphate anion to isochorismate to yield 2-succinyl-5-enolpyruvyl-6-hydroxy-3-cyclohexene-1-carboxylate (SEPHCHC). The protein is 2-succinyl-5-enolpyruvyl-6-hydroxy-3-cyclohexene-1-carboxylate synthase of Edwardsiella ictaluri (strain 93-146).